Reading from the N-terminus, the 100-residue chain is Protein alpha-2 (100 aa).

This chain is Protein alpha-2, found in Bos taurus (Bovine).